A 197-amino-acid chain; its full sequence is ATP-dependent Clp protease proteolytic subunit 1 (197 aa).

His126 is a catalytic residue.

Belongs to the peptidase S14 family. In terms of assembly, fourteen ClpP subunits assemble into 2 heptameric rings which stack back to back to give a disk-like structure with a central cavity, resembling the structure of eukaryotic proteasomes.

The protein resides in the cytoplasm. It catalyses the reaction Hydrolysis of proteins to small peptides in the presence of ATP and magnesium. alpha-casein is the usual test substrate. In the absence of ATP, only oligopeptides shorter than five residues are hydrolyzed (such as succinyl-Leu-Tyr-|-NHMec, and Leu-Tyr-Leu-|-Tyr-Trp, in which cleavage of the -Tyr-|-Leu- and -Tyr-|-Trp bonds also occurs).. Its function is as follows. Cleaves peptides in various proteins in a process that requires ATP hydrolysis. Has a chymotrypsin-like activity. Plays a major role in the degradation of misfolded proteins. The sequence is that of ATP-dependent Clp protease proteolytic subunit 1 from Nocardia farcinica (strain IFM 10152).